A 233-amino-acid chain; its full sequence is Uridylate kinase (233 aa).

ATP is bound by residues 9 to 12 (KLSG), glycine 51, and arginine 55. UMP-binding positions include aspartate 69 and 130-137 (TGNPFFST). Residues asparagine 158, tyrosine 164, and aspartate 167 each contribute to the ATP site.

The protein belongs to the UMP kinase family. As to quaternary structure, homohexamer.

Its subcellular location is the cytoplasm. The catalysed reaction is UMP + ATP = UDP + ADP. The protein operates within pyrimidine metabolism; CTP biosynthesis via de novo pathway; UDP from UMP (UMPK route): step 1/1. Inhibited by UTP. In terms of biological role, catalyzes the reversible phosphorylation of UMP to UDP. In Thermus thermophilus (strain ATCC BAA-163 / DSM 7039 / HB27), this protein is Uridylate kinase.